A 199-amino-acid chain; its full sequence is Inner membrane-spanning protein YciB (199 aa).

Transmembrane regions (helical) follow at residues 3 to 23 (LLIDFFPIILFFVAFKVWGIY), 47 to 67 (VEPMQWVSLGVIVLFGGATLL), 76 to 96 (WKPSVLYWLMGSALLIGQLVF), 119 to 139 (LNWSWAAFFAVMGALNLVIAY), and 149 to 169 (FKLFGGMGLMLVFVIGQAIYM). A disordered region spans residues 180–199 (AAAATPDALPPPGVQQDKQP).

The protein belongs to the YciB family.

The protein resides in the cell inner membrane. Its function is as follows. Plays a role in cell envelope biogenesis, maintenance of cell envelope integrity and membrane homeostasis. This is Inner membrane-spanning protein YciB from Delftia acidovorans (strain DSM 14801 / SPH-1).